A 280-amino-acid polypeptide reads, in one-letter code: Succinate dehydrogenase [ubiquinone] iron-sulfur subunit, mitochondrial (280 aa).

The transit peptide at 1-28 directs the protein to the mitochondrion; sequence MAAVVALSLRRRLPATTLGGACLQASRG. A 2Fe-2S ferredoxin-type domain is found at 40–133; that stretch reads KKFAIYRWDP…VSKIYPLPHM (94 aa). An N6-acetyllysine mark is found at lysine 51 and lysine 55. [2Fe-2S] cluster contacts are provided by cysteine 93, cysteine 98, cysteine 101, and cysteine 113. The interaction with SDHAF1 stretch occupies residues 146–218; that stretch reads FYAQYKSIEP…PAVLMQAYRW (73 aa). The 4Fe-4S ferredoxin-type domain maps to 176–206; it reads EREKLDGLYECILCACCSTSCPSYWWNGDKY. Cysteine 186, cysteine 189, and cysteine 192 together coordinate [4Fe-4S] cluster. [3Fe-4S] cluster is bound at residue cysteine 196. Tryptophan 201 serves as a coordination point for a ubiquinone. Residues cysteine 243 and cysteine 249 each coordinate [3Fe-4S] cluster. Cysteine 253 contributes to the [4Fe-4S] cluster binding site.

This sequence belongs to the succinate dehydrogenase/fumarate reductase iron-sulfur protein family. As to quaternary structure, component of complex II composed of four subunits: the flavoprotein (FP) SDHA, iron-sulfur protein (IP) SDHB, and a cytochrome b560 composed of SDHC and SDHD. Interacts with SDHAF1; the interaction is required for iron-sulfur cluster incorporation into SDHB. (Microbial infection) Interacts with JC virus small t antigen. The cofactor is [2Fe-2S] cluster. [3Fe-4S] cluster serves as cofactor. Requires [4Fe-4S] cluster as cofactor.

It localises to the mitochondrion inner membrane. It catalyses the reaction a quinone + succinate = fumarate + a quinol. The catalysed reaction is (R)-malate + a quinone = enol-oxaloacetate + a quinol. It carries out the reaction (S)-malate + a quinone = enol-oxaloacetate + a quinol. The protein operates within carbohydrate metabolism; tricarboxylic acid cycle; fumarate from succinate (eukaryal route): step 1/1. With respect to regulation, enol-oxaloacetate inhibits the succinate dehydrogenase activity. In terms of biological role, iron-sulfur protein (IP) subunit of the succinate dehydrogenase complex (mitochondrial respiratory chain complex II), responsible for transferring electrons from succinate to ubiquinone (coenzyme Q). SDH also oxidizes malate to the non-canonical enol form of oxaloacetate, enol-oxaloacetate. Enol-oxaloacetate, which is a potent inhibitor of the succinate dehydrogenase activity, is further isomerized into keto-oxaloacetate. This is Succinate dehydrogenase [ubiquinone] iron-sulfur subunit, mitochondrial (SDHB) from Homo sapiens (Human).